Reading from the N-terminus, the 301-residue chain is Syntaxin-17 (301 aa).

S2 carries the N-acetylserine modification. Over 2 to 227 (SEDEEKVKLR…KNLQKAAKYK (226 aa)) the chain is Cytoplasmic. K41 carries the post-translational modification N6-acetyllysine. The stretch at 49–128 (DKLHEEHINA…QVNDEELLQP (80 aa)) forms a coiled coil. The residue at position 156 (Y156) is a Phosphotyrosine; by ABL1. Residues 161–223 (IPQDQNAAES…EEGTKNLQKA (63 aa)) form the t-SNARE coiled-coil homology domain. The helical transmembrane segment at 228 to 248 (LAALPVAGALIGGVVGGPIGL) threads the bilayer. Residues 228–274 (LAALPVAGALIGGVVGGPIGLLAGFKVAGIAAALGGGVLGFTGGKLI) form a necessary and sufficient for localization to autophagosome region. The Lumenal segment spans residues 249–253 (LAGFK). Residues 254–274 (VAGIAAALGGGVLGFTGGKLI) traverse the membrane as a helical segment. Topologically, residues 275-301 (QRRKQKMMEKLTSSCPDLPSQSDKKRS) are cytoplasmic. At S288 the chain carries Phosphoserine. The Endoplasmic reticulum retention signal motif lies at 298–301 (KKRS).

The protein belongs to the syntaxin family. In terms of assembly, forms a SNARE complex composed of VAMP8, SNAP29 and STX17 involved in fusion of autophagosome with lysosome. May interact with VTI1B. Probably interacts with BET1, SCFD1 and SEC22B. Interacts with PTPN2 and ABL1; involved in STX17 phosphorylation. Interacts with COPB1. Interacts with TMED9 and TMED10; the interaction is direct. Interacts with VAMP7. Interacts with RUBCNL/PACER; promoting targeting of RUBCNL/PACER to autophagosome. Interacts with VAMP8, SNAP29, VPS39 and VPS41; these interactions are increased in the absence of TMEM39A. Interacts with IRGM; promoting STX17 recruitment to autophagosomes. Interacts with ATG8 proteins GABARAP and MAP1LC3B. Interacts with RNF115; this interaction enhances STX17 stability which in turn promotes autophagosome maturation. Interacts with RAB39A (GTP-bound); the interaction promotes autophagosome-lysosome membrane fusion driven by STX17-SNAP29-VAMP8. Interacts with RAB39B; the interaction may promote a different fonction in autophagy as compared with RAB39A. Post-translationally, dephosphorylation by PTPN2; regulates exit from the endoplasmic reticulum. Phosphorylated at Tyr-156 probably by ABL1.

It is found in the endoplasmic reticulum membrane. It localises to the smooth endoplasmic reticulum membrane. Its subcellular location is the endoplasmic reticulum-Golgi intermediate compartment membrane. The protein localises to the cytoplasmic vesicle. The protein resides in the autophagosome membrane. It is found in the COPII-coated vesicle membrane. It localises to the cytoplasm. Its subcellular location is the cytosol. The protein localises to the mitochondrion membrane. The protein resides in the autolysosome membrane. In terms of biological role, SNAREs, soluble N-ethylmaleimide-sensitive factor-attachment protein receptors, are essential proteins for fusion of cellular membranes. SNAREs localized on opposing membranes assemble to form a trans-SNARE complex, an extended, parallel four alpha-helical bundle that drives membrane fusion. STX17 is a SNARE of the autophagosome involved in autophagy through the direct control of autophagosome membrane fusion with the lysosome membrane. May also play a role in the early secretory pathway where it may maintain the architecture of the endoplasmic reticulum-Golgi intermediate compartment/ERGIC and Golgi and/or regulate transport between the endoplasmic reticulum, the ERGIC and the Golgi. The polypeptide is Syntaxin-17 (Mus musculus (Mouse)).